Reading from the N-terminus, the 283-residue chain is MAGNFWQSSHYLQWILDKQDLLKERQKDLKFLSEEEYWKLQIFFTNVIQALGEHLKLRQQVIATATVYFKRFYARYSLKSIDPVLMAPTCVFLASKVEEFGVVSNTRLISAATSVLKTRFSYAFPKEFPYRMNHILECEFYLLELMDCCLIVYHPYRPLLQYVQDMGQEDMLLPLAWRIVNDTYRTDLCLLYPPFMIALACLHVACVVQQKDARQWFAELSVDMEKILEIIRVILKLYEQWKNFDERKEMATILNKMPKPKPPPNSEGEQGTNGSQSSGYSQS.

The 99-residue stretch at 46–144 (NVIQALGEHL…ILECEFYLLE (99 aa)) folds into the Cyclin N-terminal domain. The interval 252-283 (TILNKMPKPKPPPNSEGEQGTNGSQSSGYSQS) is disordered. A compositionally biased stretch (polar residues) spans 267-283 (EGEQGTNGSQSSGYSQS).

This sequence belongs to the cyclin family. Cyclin C subfamily. In terms of assembly, component of the Mediator complex. The cylin/CDK pair formed by ccnc/cdk8 also associates with the large subunit of RNA polymerase II.

The protein resides in the nucleus. Functionally, component of the Mediator complex, a coactivator involved in regulated gene transcription of nearly all RNA polymerase II-dependent genes. Mediator functions as a bridge to convey information from gene-specific regulatory proteins to the basal RNA polymerase II transcription machinery. Mediator is recruited to promoters by direct interactions with regulatory proteins and serves as a scaffold for the assembly of a functional preinitiation complex with RNA polymerase II and the general transcription factors. Binds to and activates cyclin-dependent kinase cdk8 that phosphorylates the CTD (C-terminal domain) of the large subunit of RNA polymerase II (RNAp II), which may inhibit the formation of a transcription initiation complex. The protein is Cyclin-C (ccnc) of Xenopus tropicalis (Western clawed frog).